Here is a 932-residue protein sequence, read N- to C-terminus: UPF0182 protein Syncc9902_1151 (932 aa).

9 helical membrane passes run 4-24, 40-60, 85-105, 124-144, 151-171, 201-221, 243-263, 293-313, and 315-335; these read FLWILLPPVLVVVARMHVEWV, MLQLLFAGAGSIPVFLAVLWL, VLMVSGLAFLACSVVLSDLAI, MASEWKALLPIQLAIAGVSLC, WVAVAMGFALVLVVSRAWGVW, IQLGLELLVLSGTFTTAHAVW, YRWLSIGVGTNLLGVAGLVWL, LLAFVLLVLGVSCIVRGIGHL, and RLLLLCVAAIVIIESTLTPLT.

This sequence belongs to the UPF0182 family.

The protein localises to the cell membrane. This chain is UPF0182 protein Syncc9902_1151, found in Synechococcus sp. (strain CC9902).